Consider the following 177-residue polypeptide: Tubulin beta chain (177 aa).

The disordered stretch occupies residues 156–177 (YQDATAEEEGEFDEEEGDEEAA). Residues 160–177 (TAEEEGEFDEEEGDEEAA) show a composition bias toward acidic residues.

The protein belongs to the tubulin family. In terms of assembly, dimer of alpha and beta chains. A typical microtubule is a hollow water-filled tube with an outer diameter of 25 nm and an inner diameter of 15 nM. Alpha-beta heterodimers associate head-to-tail to form protofilaments running lengthwise along the microtubule wall with the beta-tubulin subunit facing the microtubule plus end conferring a structural polarity. Microtubules usually have 13 protofilaments but different protofilament numbers can be found in some organisms and specialized cells. Mg(2+) serves as cofactor.

The protein localises to the cytoplasm. It localises to the cytoskeleton. Tubulin is the major constituent of microtubules, a cylinder consisting of laterally associated linear protofilaments composed of alpha- and beta-tubulin heterodimers. Microtubules grow by the addition of GTP-tubulin dimers to the microtubule end, where a stabilizing cap forms. Below the cap, tubulin dimers are in GDP-bound state, owing to GTPase activity of alpha-tubulin. The polypeptide is Tubulin beta chain (Lytechinus pictus (Painted sea urchin)).